Consider the following 516-residue polypeptide: Polyprenol-phosphate-mannose--protein mannosyltransferase (516 aa).

Over residues 1–11 (MTALDTDTPTA) the composition is skewed to polar residues. Positions 1 to 23 (MTALDTDTPTAGRSAPLISPGPV) are disordered. Helical transmembrane passes span 113 to 133 (YNGLGWRFSGAVCGVIIVMLV), 143 to 163 (STLVGAIAGLLIIADGVSFVS), 166 to 186 (TALLDVFLVMFAVAAFACLMV), 234 to 254 (WSGLYFVLFFGVMTLVFDAIA), 275 to 295 (AAYVFGLIPFAVYLASYAPWF), 384 to 404 (VMLVGTPAMWFIAVPVLGWAL), 413 to 433 (WRYGAVLVGYMAGFLPWFADI), 437 to 457 (MYFFYATVMAPFLVLAIALIL), and 473 to 493 (LGLLTVCFYVALVITNFAWMY).

This sequence belongs to the glycosyltransferase 39 family.

It localises to the cell membrane. It functions in the pathway protein modification; protein glycosylation. Functionally, protein O-mannosyltransferase that catalyzes the transfer of a single mannose residue from a polyprenol phospho-mannosyl lipidic donor to the hydroxyl group of selected serine and threonine residues in acceptor proteins. Involved in DNA conjugation, in at least the recipient strain. This is Polyprenol-phosphate-mannose--protein mannosyltransferase (pmt) from Mycolicibacterium smegmatis (strain MKD8) (Mycobacterium smegmatis).